The following is a 77-amino-acid chain: Small ribosomal subunit protein bS20 (77 aa).

The interval 47–77 (ASSSIDKAESKGLIHKNKASRDKARLAAKLG) is disordered.

The protein belongs to the bacterial ribosomal protein bS20 family.

Its function is as follows. Binds directly to 16S ribosomal RNA. This Streptococcus pyogenes serotype M1 protein is Small ribosomal subunit protein bS20.